The chain runs to 340 residues: Delta(1)-pyrroline-2-carboxylate reductase 1 (340 aa).

Ser50 serves as the catalytic Charge relay system. The active-site Proton donor is His51. Arg55 is a substrate binding site. 123–127 (HFSAL) lines the NADP(+) pocket. A substrate-binding site is contributed by Thr163. Position 181–183 (181–183 (DFA)) interacts with NADP(+). 189–190 (RG) contacts substrate. Asp191 serves as the catalytic Charge relay system. Residues 232–233 (HK) and 307–313 (RLPSQRR) each bind NADP(+).

It belongs to the LDH2/MDH2 oxidoreductase family. Homodimer.

The enzyme catalyses L-proline + NAD(+) = 1-pyrroline-2-carboxylate + NADH + H(+). The catalysed reaction is L-proline + NADP(+) = 1-pyrroline-2-carboxylate + NADPH + H(+). In terms of biological role, catalyzes the reduction of Delta(1)-pyrroline-2-carboxylate (Pyr2C) to L-proline, using NADPH as the electron donor. May be involved in a degradation pathway that converts trans-3-hydroxy-L-proline (t3LHyp) to L-proline. The polypeptide is Delta(1)-pyrroline-2-carboxylate reductase 1 (Burkholderia ambifaria (strain ATCC BAA-244 / DSM 16087 / CCUG 44356 / LMG 19182 / AMMD) (Burkholderia cepacia (strain AMMD))).